The primary structure comprises 232 residues: Small ribosomal subunit protein uS2 (232 aa).

It belongs to the universal ribosomal protein uS2 family.

The polypeptide is Small ribosomal subunit protein uS2 (Baumannia cicadellinicola subsp. Homalodisca coagulata).